The chain runs to 293 residues: UDP-N-acetylglucosamine transferase subunit ALG13 (293 aa).

Belongs to the glycosyltransferase 28 family. In terms of assembly, heterodimer with ALG14 to form a functional enzyme.

Its subcellular location is the endoplasmic reticulum. It carries out the reaction an N-acetyl-alpha-D-glucosaminyl-diphospho-di-trans,poly-cis-dolichol + UDP-N-acetyl-alpha-D-glucosamine = an N,N'-diacetylchitobiosyl-diphospho-di-trans,poly-cis-dolichol + UDP + H(+). Functionally, involved in protein N-glycosylation. Essential for the second step of the dolichol-linked oligosaccharide pathway. The sequence is that of UDP-N-acetylglucosamine transferase subunit ALG13 (ALG13) from Candida albicans (strain SC5314 / ATCC MYA-2876) (Yeast).